The primary structure comprises 169 residues: Cell division inhibitor SulA (169 aa).

The tract at residues 106–112 (ALRTGNY) is ftsZ binding. Positions 162–169 (KIHSNLYH) are lon protease binding.

This sequence belongs to the SulA family. As to quaternary structure, interacts with FtsZ. In terms of processing, is rapidly cleaved and degraded by the Lon protease once DNA damage is repaired.

Its function is as follows. Component of the SOS system and an inhibitor of cell division. Accumulation of SulA causes rapid cessation of cell division and the appearance of long, non-septate filaments. In the presence of GTP, binds a polymerization-competent form of FtsZ in a 1:1 ratio, thus inhibiting FtsZ polymerization and therefore preventing it from participating in the assembly of the Z ring. This mechanism prevents the premature segregation of damaged DNA to daughter cells during cell division. This Salmonella choleraesuis (strain SC-B67) protein is Cell division inhibitor SulA.